Reading from the N-terminus, the 308-residue chain is MTDVTTLPDRRLLLVHAHPDDEAIGTGATMAHYAATGGHVTLVTCTLGEEGEVHVPELAQLAAAGADQLGGYRIGELAAACRSLGVTDHRFLGGAGRYRDSGMMGLATNEHPRAFWRADLDEAAAHLVELMREVRPQVMVTYDDNGFYGHPDHIQAHRVAMRAYELAAVEGFAPAKVYWTAMPQSVLEAGMVHFAGSSDNPFAGIEEAVELPFCTPDDRIAARIDATGQHAAKEAAMRAHATQIPDNSWLYSIAANFGSEFMGVEYYTLAVGAKGPGAGPYGWEDDLFAGLPVAAGPDRTRAGVTGPW.

Zn(2+) contacts are provided by H18, D21, and H153.

This sequence belongs to the MshB deacetylase family. Zn(2+) is required as a cofactor.

It catalyses the reaction 1D-myo-inositol 2-acetamido-2-deoxy-alpha-D-glucopyranoside + H2O = 1D-myo-inositol 2-amino-2-deoxy-alpha-D-glucopyranoside + acetate. Catalyzes the deacetylation of 1D-myo-inositol 2-acetamido-2-deoxy-alpha-D-glucopyranoside (GlcNAc-Ins) in the mycothiol biosynthesis pathway. The polypeptide is 1D-myo-inositol 2-acetamido-2-deoxy-alpha-D-glucopyranoside deacetylase (Salinispora arenicola (strain CNS-205)).